The following is a 494-amino-acid chain: Alpha-amylase-related protein (494 aa).

The N-terminal stretch at 1–20 (MFKFAAAVILCLVAASSTLA) is a signal peptide. Q21 carries the post-translational modification Pyrrolidone carboxylic acid. Cysteines 48 and 104 form a disulfide. Residues N118, Q169, and D178 each coordinate Ca(2+). C157 and C171 are joined by a disulfide. R206 is a chloride binding site. Residue D208 is the Nucleophile of the active site. H212 lines the Ca(2+) pocket. The Proton donor role is filled by E245. Chloride contacts are provided by N308 and R343. 3 disulfides stabilise this stretch: C376-C382, C418-C441, and C448-C460.

This sequence belongs to the glycosyl hydrolase 13 family. Monomer. Ca(2+) is required as a cofactor. It depends on chloride as a cofactor.

It is found in the secreted. The enzyme catalyses Endohydrolysis of (1-&gt;4)-alpha-D-glucosidic linkages in polysaccharides containing three or more (1-&gt;4)-alpha-linked D-glucose units.. The chain is Alpha-amylase-related protein (Amyrel) from Drosophila atripex (Fruit fly).